A 530-amino-acid polypeptide reads, in one-letter code: uncharacterized protein (530 aa).

The disordered stretch occupies residues 1-33 (MNNMSLKFPDIAINSSESSDDEDPSSKNEKKDG). Over residues 24–33 (PSSKNEKKDG) the composition is skewed to basic and acidic residues. The next 12 helical transmembrane spans lie at 83–103 (FFIL…KTAV), 124–144 (WLST…GYLL), 147–167 (FPIS…VLLM), 181–201 (FFSG…TAMW), 211–231 (VVSW…LGYG), 244–264 (YPFL…LFFP), 323–343 (VTNA…YSGI), 346–366 (TLLT…SGIF), 375–395 (IPLA…IWKI), 404–424 (VVGV…LSLL), 436–456 (TVNA…PQLF), and 471–491 (SLVS…YYIF).

Belongs to the major facilitator superfamily. Allantoate permease family.

The protein resides in the endoplasmic reticulum. It localises to the membrane. This is an uncharacterized protein from Schizosaccharomyces pombe (strain 972 / ATCC 24843) (Fission yeast).